Reading from the N-terminus, the 101-residue chain is YcgL domain-containing protein ACIAD2309 (101 aa).

In terms of domain architecture, YcgL spans 1–93; it reads MHCDIYRSSK…PPEGFINPSD (93 aa).

This is YcgL domain-containing protein ACIAD2309 from Acinetobacter baylyi (strain ATCC 33305 / BD413 / ADP1).